Reading from the N-terminus, the 394-residue chain is MKAKRMTDLDLTGKRVLIREDLNVPIKDGQVADDTRVRAAAESIRQAMQAGGRVLVMSHLGRPKEGEYDAEASMAPVARRLGEILGCEVPVVRDWLEGVDVPEGGVALAENVRFQPGETKDDEALSRRMAALCDVFVMDAFGTAHRAQASTHGVARFAPEACAGPLLSAELEALGKALDNPARPMIAIVGGSKVSGKVQVLEALTHKVDQLIVGGGIANTFIAAAGYSVGKSLYEADFVDTAKRLMEEARAKGGEIPIPEDVVTARDFSADAEAHVHPVDAVPDDEMILDVGPQTRARYDGMLRNAGTVVWNGPVGVFEMAPFAGGTRALAEAIAASDGFSIAGGGDTLAAVEQFGITDQVSYISTGGGAFLEFLEGRVLPGVAALEQHAAAHS.

Residues 21-23, arginine 36, 59-62, arginine 113, and arginine 146 contribute to the substrate site; these read DLN and HLGR. ATP is bound by residues lysine 197, glutamate 319, and 345-348; that span reads GGDT.

The protein belongs to the phosphoglycerate kinase family. In terms of assembly, monomer.

Its subcellular location is the cytoplasm. The catalysed reaction is (2R)-3-phosphoglycerate + ATP = (2R)-3-phospho-glyceroyl phosphate + ADP. It participates in carbohydrate degradation; glycolysis; pyruvate from D-glyceraldehyde 3-phosphate: step 2/5. The sequence is that of Phosphoglycerate kinase from Halorhodospira halophila (strain DSM 244 / SL1) (Ectothiorhodospira halophila (strain DSM 244 / SL1)).